We begin with the raw amino-acid sequence, 97 residues long: Putative septation protein SpoVG (97 aa).

The protein belongs to the SpoVG family.

Its function is as follows. Essential for sporulation. Interferes with or is a negative regulator of the pathway leading to asymmetric septation. This chain is Putative septation protein SpoVG, found in Bacillus velezensis (strain DSM 23117 / BGSC 10A6 / LMG 26770 / FZB42) (Bacillus amyloliquefaciens subsp. plantarum).